Consider the following 432-residue polypeptide: Glucose-6-phosphate isomerase (432 aa).

E283 acts as the Proton donor in catalysis. Active-site residues include H304 and K418.

The protein belongs to the GPI family.

It is found in the cytoplasm. It catalyses the reaction alpha-D-glucose 6-phosphate = beta-D-fructose 6-phosphate. It functions in the pathway carbohydrate biosynthesis; gluconeogenesis. The protein operates within carbohydrate degradation; glycolysis; D-glyceraldehyde 3-phosphate and glycerone phosphate from D-glucose: step 2/4. Catalyzes the reversible isomerization of glucose-6-phosphate to fructose-6-phosphate. The sequence is that of Glucose-6-phosphate isomerase from Rubrobacter xylanophilus (strain DSM 9941 / JCM 11954 / NBRC 16129 / PRD-1).